We begin with the raw amino-acid sequence, 274 residues long: Nickel/cobalt efflux system RcnA (274 aa).

Residues 1–12 (MTEFTTLLQQGN) are Periplasmic-facing. A helical membrane pass occupies residues 13–33 (AWFFIPSAILLGALHGLEPGH). Residues 34–56 (SKTMMAAFIIAIKGTIKQAVMLG) lie on the Cytoplasmic side of the membrane. The chain crosses the membrane as a helical span at residues 57-77 (LAATISHTAVVWLIAFGGMVI). Topologically, residues 78–86 (SKRFTAQSA) are periplasmic. The chain crosses the membrane as a helical span at residues 87-107 (EPWLQLISAVIIISTAFWMFW). Residues 108–174 (RTWRGERNWL…FDGREVTNWQ (67 aa)) lie on the Cytoplasmic side of the membrane. Residues 127-137 (HHHHDHEDHHD) are compositionally biased toward basic and acidic residues. The disordered stretch occupies residues 127 to 153 (HHHHDHEDHHDHGHHHHHEHGEYQDAH). The helical transmembrane segment at 175 to 195 (ILLFGLTGGLIPCPAAITVLL) threads the bilayer. The Periplasmic segment spans residues 196-209 (ICIQLKALTLGATL). The helical transmembrane segment at 210-230 (VVSFSLGLALTLVTVSVGAAI) threads the bilayer. The Cytoplasmic segment spans residues 231-251 (SVQQVAKRWSGFNTLAKRAPY). The chain crosses the membrane as a helical span at residues 252 to 272 (FSSLLIGLVGVYMGVHGFMGI). The Periplasmic segment spans residues 273–274 (MR).

It belongs to the NiCoT transporter (TC 2.A.52) family. RcnA subfamily.

It is found in the cell inner membrane. In terms of biological role, efflux system for nickel and cobalt. The protein is Nickel/cobalt efflux system RcnA (rcnA) of Escherichia coli O6:K15:H31 (strain 536 / UPEC).